Here is a 341-residue protein sequence, read N- to C-terminus: DNA-directed RNA polymerase subunit alpha (341 aa).

The alpha N-terminal domain (alpha-NTD) stretch occupies residues 1 to 233 (MVREEVAGST…DLFLPFLHAE (233 aa)). The alpha C-terminal domain (alpha-CTD) stretch occupies residues 269-341 (IPLNCIFIDQ…IDLLKNKLSF (73 aa)).

It belongs to the RNA polymerase alpha chain family. As to quaternary structure, in plastids the minimal PEP RNA polymerase catalytic core is composed of four subunits: alpha, beta, beta', and beta''. When a (nuclear-encoded) sigma factor is associated with the core the holoenzyme is formed, which can initiate transcription.

The protein resides in the plastid. The protein localises to the chloroplast. It catalyses the reaction RNA(n) + a ribonucleoside 5'-triphosphate = RNA(n+1) + diphosphate. Its function is as follows. DNA-dependent RNA polymerase catalyzes the transcription of DNA into RNA using the four ribonucleoside triphosphates as substrates. This chain is DNA-directed RNA polymerase subunit alpha, found in Lolium perenne (Perennial ryegrass).